The sequence spans 342 residues: 3-isopropylmalate dehydrogenase (342 aa).

Residues Arg87, Arg97, Arg121, and Asp212 each contribute to the substrate site. 3 residues coordinate Mg(2+): Asp212, Asp236, and Asp240. NAD(+) is bound at residue 272–284 (GSAPDIAGRQLAD). Residues 319–328 (RAAAGAAQPS) show a composition bias toward low complexity. The segment at 319 to 342 (RAAAGAAQPSTRERGEDLAARAAG) is disordered. Over residues 329–342 (TRERGEDLAARAAG) the composition is skewed to basic and acidic residues.

Belongs to the isocitrate and isopropylmalate dehydrogenases family. LeuB type 2 subfamily. In terms of assembly, homodimer. The cofactor is Mg(2+). Requires Mn(2+) as cofactor.

The protein resides in the cytoplasm. The enzyme catalyses (2R,3S)-3-isopropylmalate + NAD(+) = 4-methyl-2-oxopentanoate + CO2 + NADH. Its pathway is amino-acid biosynthesis; L-leucine biosynthesis; L-leucine from 3-methyl-2-oxobutanoate: step 3/4. Functionally, catalyzes the oxidation of 3-carboxy-2-hydroxy-4-methylpentanoate (3-isopropylmalate) to 3-carboxy-4-methyl-2-oxopentanoate. The product decarboxylates to 4-methyl-2 oxopentanoate. This chain is 3-isopropylmalate dehydrogenase, found in Frankia casuarinae (strain DSM 45818 / CECT 9043 / HFP020203 / CcI3).